We begin with the raw amino-acid sequence, 681 residues long: Glycogen-binding subunit 76A (681 aa).

Disordered regions lie at residues 1–20 (MNDP…SRPP), 53–94 (LGSQ…DLQP), 232–251 (SLTE…NGHL), 285–391 (FADR…ASNL), and 405–435 (QDAT…CRPQ). The segment covering 59–69 (EEGEGNAEDEP) has biased composition (acidic residues). The segment covering 72–91 (NGTSTNTWVNSHDSEQTVTD) has biased composition (polar residues). Composition is skewed to basic and acidic residues over residues 237–251 (EQTK…NGHL), 297–308 (RVQKESSQERVP), and 321–336 (PSDR…RVQE). Polar residues predominate over residues 353–364 (TESISTEVTTLE). Residues 365–374 (RSPEESRNDE) show a composition bias toward basic and acidic residues. The CBM21 domain maps to 525–632 (AVREKQVSLE…NNYGANYCFQ (108 aa)). T545 is subject to Phosphothreonine. Phosphoserine occurs at positions 547 and 549.

The polypeptide is Glycogen-binding subunit 76A (Gbs-76A) (Drosophila melanogaster (Fruit fly)).